A 117-amino-acid polypeptide reads, in one-letter code: Large ribosomal subunit protein uL18 (117 aa).

This sequence belongs to the universal ribosomal protein uL18 family. As to quaternary structure, part of the 50S ribosomal subunit; part of the 5S rRNA/L5/L18/L25 subcomplex. Contacts the 5S and 23S rRNAs.

In terms of biological role, this is one of the proteins that bind and probably mediate the attachment of the 5S RNA into the large ribosomal subunit, where it forms part of the central protuberance. The polypeptide is Large ribosomal subunit protein uL18 (Vibrio cholerae serotype O1 (strain ATCC 39541 / Classical Ogawa 395 / O395)).